We begin with the raw amino-acid sequence, 361 residues long: NAD-dependent protein deacetylase hst2-1 (361 aa).

Residues 16–276 (SVLEARTVEA…RKLARALGWE (261 aa)) enclose the Deacetylase sirtuin-type domain. NAD(+) is bound by residues 43–63 (GAGI…TGIY) and 126–129 (QNID). Histidine 146 (proton acceptor) is an active-site residue. 4 residues coordinate Zn(2+): cysteine 154, cysteine 157, cysteine 178, and cysteine 181. Residues 217 to 219 (GTS), 242 to 244 (NRE), and cysteine 262 contribute to the NAD(+) site. Residues 294 to 328 (EEELATPRTREERLENEISRLTAEIDKTLKISDAY) adopt a coiled-coil conformation. The tract at residues 335 to 361 (RLEGEPLSSPESNGTGLAHVFPHLARR) is disordered.

Belongs to the sirtuin family. Class I subfamily. Requires Zn(2+) as cofactor.

The protein localises to the cytoplasm. Its subcellular location is the nucleus. The catalysed reaction is N(6)-acetyl-L-lysyl-[protein] + NAD(+) + H2O = 2''-O-acetyl-ADP-D-ribose + nicotinamide + L-lysyl-[protein]. In terms of biological role, NAD-dependent histone deacetylase, which could function in telomeric silencing, cell cycle progression and chromosome stability. The protein is NAD-dependent protein deacetylase hst2-1 of Emericella nidulans (strain FGSC A4 / ATCC 38163 / CBS 112.46 / NRRL 194 / M139) (Aspergillus nidulans).